A 216-amino-acid polypeptide reads, in one-letter code: Transmembrane protein 186 (216 aa).

The Mitochondrial matrix segment spans residues 1-68; sequence MAFLLRAVPR…IYRFNAIRAL (68 aa). The chain crosses the membrane as a helical span at residues 69–91; sequence GFLSRLKLAQTAVTVVALPPGFY. Residues 92-103 lie on the Mitochondrial intermembrane side of the membrane; that stretch reads CYSQGLMTLSSL. The chain crosses the membrane as a helical span at residues 104 to 124; the sequence is GLMSGIASFALVMLCWMSHFF. The Mitochondrial matrix portion of the chain corresponds to 125 to 216; sequence RRLVGILYVN…GTLATLKNSK (92 aa).

This sequence belongs to the TMEM186 family. Part of the mitochondrial complex I assembly/MCIA complex that comprises at least the core subunits TMEM126B, NDUFAF1, ECSIT and ACAD9 and complement subunits such as COA1 and TMEM186. Interacts with MT-ND3.

It is found in the mitochondrion inner membrane. Functionally, as part of the MCIA complex, required for efficient assembly of the mitochondrial complex I. The polypeptide is Transmembrane protein 186 (Rattus norvegicus (Rat)).